The sequence spans 325 residues: Melanocortin receptor 5 (325 aa).

Residues 1 to 37 (MNSSFHLHFLDLGLNATEGNLSGLSVRNASSPCEDMG) lie on the Extracellular side of the membrane. 4 N-linked (GlcNAc...) asparagine glycosylation sites follow: N2, N15, N20, and N28. The helical transmembrane segment at 38-61 (IAVEVFLALGLISLLENILVIGAI) threads the bilayer. Residues 62 to 73 (VRNRNLHIPMYF) lie on the Cytoplasmic side of the membrane. A helical transmembrane segment spans residues 74–97 (FVGSLAVADMLVSLSNFWETITIY). At 98–114 (LLTNKHLVMADASVRHL) the chain is on the extracellular side. The chain crosses the membrane as a helical span at residues 115 to 138 (DNVFDSMICISVVASMCSLLAIAV). Over 139–155 (DRYVTIFCRLRYQRIMT) the chain is Cytoplasmic. Residues 156–179 (GRRSGAIIAGIWAFCTSCGTVFIV) form a helical membrane-spanning segment. The Extracellular portion of the chain corresponds to 180–186 (YYESTYV). The helical transmembrane segment at 187–211 (VVCLIAMFLTMLLLMASLYTHMFLL) threads the bilayer. Topologically, residues 212–239 (ARTHVRRIAALPGHSSVRQRTGVKGAIT) are cytoplasmic. A helical transmembrane segment spans residues 240–265 (LAMLLGVFIICWAPFFLHLILMISCP). The Extracellular portion of the chain corresponds to 266–273 (QNLYCSCF). The helical transmembrane segment at 274 to 297 (MSHFNMYLILIMCNSVIDPLIYAF) threads the bilayer. The Cytoplasmic segment spans residues 298-325 (RSQEMRKTFKEIVCFQGFRTPCRFPSTY). C311 carries S-palmitoyl cysteine lipidation.

Belongs to the G-protein coupled receptor 1 family.

The protein localises to the cell membrane. Functionally, receptor for MSH (alpha, beta and gamma) and ACTH. The activity of this receptor is mediated by G proteins which activate adenylate cyclase. This receptor is a possible mediator of the immunomodulation properties of melanocortins. The chain is Melanocortin receptor 5 (MC5R) from Ovis aries (Sheep).